The primary structure comprises 243 residues: MAKVEQVLSLEPQHELKFRGPFTDVVTTNLKLGNPTDRNVCFKVKTTVPRRYCVRPNSGVIDAGASLNVSVMLQPFDYDPNEKSKHKFMVQSMFAPPDTSDMEAVWKEAKPEDLMDSKLRCVFELPAENAKPHDVEINKIIPTSASKTEAPAAAKSLTSPLDDTEVKKVMEECRRLQGEVQRLREESRQLKEEDGLRVRKAMPSNSPVAALAATGKEEGLSARLLALVVLFFIVGVIIGKIAL.

Ala-2 carries the post-translational modification N-acetylalanine. Over 2-218 (AKVEQVLSLE…AALAATGKEE (217 aa)) the chain is Cytoplasmic. The MSP domain occupies 7–124 (VLSLEPQHEL…MDSKLRCVFE (118 aa)). Ser-146 carries the phosphoserine modification. Lys-147 participates in a covalent cross-link: Glycyl lysine isopeptide (Lys-Gly) (interchain with G-Cter in SUMO1). Ser-156 and Ser-159 each carry phosphoserine. Residues 161–196 (LDDTEVKKVMEECRRLQGEVQRLREESRQLKEEDGL) adopt a coiled-coil conformation. Position 206 is a phosphoserine (Ser-206). A helical; Anchor for type IV membrane protein transmembrane segment spans residues 219–239 (GLSARLLALVVLFFIVGVIIG).

Belongs to the VAMP-associated protein (VAP) (TC 9.B.17) family. Homodimer, and heterodimer with VAPA. Interacts with VAMP1 and VAMP2. Interacts (via MSP domain) with ZFYVE27. Interacts with RMDN3. Interacts with KIF5A in a ZFYVE27-dependent manner. Interacts (via MSP domain) with STARD3 (via phospho-FFAT motif). Interacts with STARD3NL (via FFAT motif). Interacts with CERT1. Interacts with PLEKHA3 and SACM1L to form a ternary complex. Interacts with VPS13A (via FFAT motif). Interacts with RB1CC1 (via phosphorylated FFAT motif), MIGA2 (via phosphorylated FFAT motif), RMDN3 (via phosphorylated FFAT motif), OSBPL1A (via FFAT motif), KCNB1 (via phosphorylated FFAT motif) and KCNB2 (via phosphorylated FFAT motif). Interacts (via MSP domain) with WDR44 (via FFAT motif); the interactions connect the endoplasmic reticulum (ER) with the endosomal tubule.

Its subcellular location is the endoplasmic reticulum membrane. Functionally, endoplasmic reticulum (ER)-anchored protein that mediates the formation of contact sites between the ER and endosomes via interaction with FFAT motif-containing proteins such as STARD3 or WDR44. Interacts with STARD3 in a FFAT motif phosphorylation dependent manner. Via interaction with WDR44 participates in neosynthesized protein export. Participates in the endoplasmic reticulum unfolded protein response (UPR) by inducing ERN1/IRE1 activity. Involved in cellular calcium homeostasis regulation. This Mus musculus (Mouse) protein is Vesicle-associated membrane protein-associated protein B.